The following is a 37-amino-acid chain: Mu-cyrtautoxin-As1a (37 aa).

4 disulfides stabilise this stretch: Cys-1–Cys-15, Cys-8–Cys-19, Cys-14–Cys-35, and Cys-26–Cys-31.

Belongs to the neurotoxin 13 (insecticidal toxin ABC) family. 01 (Aps III) subfamily. Expressed by the venom gland.

It localises to the secreted. Functionally, the recombinant mu-cyrtautoxin-As1a potently and voltage-independently blocks voltage-gated sodium channels (Nav) of insects. It acts by pluging the outer vestibule of the channel. It acts in combination with a weak (30%) voltage-independent block of insect voltage-gated calcium (Cav) channels (low-voltage and high-voltage channels). Tested on DUM neurons, it inhibits sodium currents with an IC(50) of 540 nM (and a Hill coefficient &gt;1, reflecting an incomplete block at higher concentrations). In vivo, it induces flaccid paralysis in adult Australian sheep blowfly Lucilia cuprina. It is both paralytic and lethal, when injected into lepidopteran larvae. It is a slower acting toxin, being lethal at 24 hours, but not paralytic at 1 hour post-injection. This Apomastus schlingeri (Trap-door spider) protein is Mu-cyrtautoxin-As1a.